We begin with the raw amino-acid sequence, 110 residues long: DNA-directed RNA polymerase subunit omega (110 aa).

Belongs to the RNA polymerase subunit omega family. As to quaternary structure, the RNAP catalytic core consists of 2 alpha, 1 beta, 1 beta' and 1 omega subunit. When a sigma factor is associated with the core the holoenzyme is formed, which can initiate transcription.

It catalyses the reaction RNA(n) + a ribonucleoside 5'-triphosphate = RNA(n+1) + diphosphate. Functionally, promotes RNA polymerase assembly. Latches the N- and C-terminal regions of the beta' subunit thereby facilitating its interaction with the beta and alpha subunits. In Mycobacterium bovis (strain ATCC BAA-935 / AF2122/97), this protein is DNA-directed RNA polymerase subunit omega (rpoZ).